A 406-amino-acid polypeptide reads, in one-letter code: Linalool 8-monooxygenase (406 aa).

Position 355 (Cys355) interacts with heme.

Belongs to the cytochrome P450 family. Heme serves as cofactor.

It catalyses the reaction linalool + 2 reduced [NADPH--hemoprotein reductase] + 2 O2 = (6E)-8-oxolinalool + 2 oxidized [NADPH--hemoprotein reductase] + 3 H2O + 2 H(+). The protein operates within terpene metabolism; linalool degradation. In terms of biological role, catalyzes the 8-methyl hydroxylation of linalool. The protein is Linalool 8-monooxygenase (linC) of Pseudomonas putida (Arthrobacter siderocapsulatus).